Consider the following 284-residue polypeptide: MLSKQIPLGIYEKALPAGECWLERLRLAKTLGFDFVEMSVDETDARLARLDWSREQRLALVSAVAETGVRVPSMCLSAHRRFPLGSEDDAVRAQGLEIMRKAIQFAQDVGIRVIQLAGYDVYYQQANDETRCRFRDGLKESVDMASRAQVTLAMEIMDYPLMNSISKALGYAHYLNNPCFQLYPDIGNLSAWDNDVQMELQAGIGHIVAVHVKDTKPGVFKNVPFGEGVVDFERCFETLKQSGYCGPYLIEMWSETAENPAAEVAKARDWVKARMAKAGMVEAA.

Belongs to the L-ribulose-5-phosphate 3-epimerase family.

It carries out the reaction L-ribulose 5-phosphate = L-xylulose 5-phosphate. It functions in the pathway cofactor degradation; L-ascorbate degradation; D-xylulose 5-phosphate from L-ascorbate: step 3/4. Catalyzes the isomerization of L-xylulose-5-phosphate to L-ribulose-5-phosphate. Is involved in the anaerobic L-ascorbate utilization. This Salmonella typhi protein is L-ribulose-5-phosphate 3-epimerase UlaE.